Reading from the N-terminus, the 568-residue chain is 2-succinyl-5-enolpyruvyl-6-hydroxy-3-cyclohexene-1-carboxylate synthase (568 aa).

This sequence belongs to the TPP enzyme family. MenD subfamily. Homodimer. Requires Mg(2+) as cofactor. It depends on Mn(2+) as a cofactor. Thiamine diphosphate serves as cofactor.

The catalysed reaction is isochorismate + 2-oxoglutarate + H(+) = 5-enolpyruvoyl-6-hydroxy-2-succinyl-cyclohex-3-ene-1-carboxylate + CO2. Its pathway is quinol/quinone metabolism; 1,4-dihydroxy-2-naphthoate biosynthesis; 1,4-dihydroxy-2-naphthoate from chorismate: step 2/7. It functions in the pathway quinol/quinone metabolism; menaquinone biosynthesis. Functionally, catalyzes the thiamine diphosphate-dependent decarboxylation of 2-oxoglutarate and the subsequent addition of the resulting succinic semialdehyde-thiamine pyrophosphate anion to isochorismate to yield 2-succinyl-5-enolpyruvyl-6-hydroxy-3-cyclohexene-1-carboxylate (SEPHCHC). The sequence is that of 2-succinyl-5-enolpyruvyl-6-hydroxy-3-cyclohexene-1-carboxylate synthase from Pasteurella multocida (strain Pm70).